Here is a 371-residue protein sequence, read N- to C-terminus: MSL complex subunit 3B (371 aa).

Disordered regions lie at residues 1 to 47 and 160 to 230; these read MATL…DERA and EERA…PQAK. The segment covering 8–47 has biased composition (basic and acidic residues); it reads PKDDGEGKDEGGSDRGDGDSKPKGKKEVEPHTRREADERA. Positions 44–367 constitute an MRG domain; that stretch reads DERAMRIPIP…CEAHYSSKNP (324 aa). Residues 183 to 193 show a composition bias toward low complexity; sequence SESQAVAGPAA. Over residues 206 to 216 the composition is skewed to basic residues; it reads APRRSTRHSTH.

Its subcellular location is the nucleus. In terms of biological role, probable non-catalytic component of the MSL histone acetyltransferase complex, a multiprotein complex that mediates the majority of histone H4 acetylation at 'Lys-16' (H4K16ac), an epigenetic mark that prevents chromatin compaction. The protein is MSL complex subunit 3B of Mus musculus (Mouse).